Reading from the N-terminus, the 678-residue chain is Ribosome biogenesis protein BOP1 homolog (678 aa).

Positions 1–10 are enriched in basic and acidic residues; that stretch reads MGHSDGDHGS. The disordered stretch occupies residues 1–73; it reads MGHSDGDHGS…VAPRNTIGDV (73 aa). Residues 24–63 are compositionally biased toward acidic residues; it reads WSDDDDEGSLSFEDSGEGSDAESDEPDAPAVEESDSSEDE. WD repeat units follow at residues 343–384, 386–424, 463–505, 508–548, 549–588, 592–631, and 647–678; these read GHNG…KVWN, GGVVHRIAWNPSPDRHILAAVVDHDLLLLNAEVGDEDAQ, IHHK…SHHP, KLPG…KKLE, SGVREISSISIHPGGDNVIVGSKDGKLCWFDTDLSTRPYK, NHSKDITNVTFHRKYPLFASSSEDCTAYVFHGMVYSDLNQ, and SDGRGVLDCKFHPRQPWLFTAGADSVVRLYCD.

It belongs to the WD repeat BOP1/ERB1 family.

It is found in the nucleus. It localises to the nucleolus. The protein localises to the nucleoplasm. In terms of biological role, required for maturation of ribosomal RNAs and formation of the large ribosomal subunit. The polypeptide is Ribosome biogenesis protein BOP1 homolog (Oryza sativa subsp. japonica (Rice)).